We begin with the raw amino-acid sequence, 1285 residues long: Peroxidasin homolog pxn-1 (1285 aa).

The first 20 residues, 1 to 20 (MNLYLLLLVIATSSWQFVAG), serve as a signal peptide directing secretion. The 33-residue stretch at 21 to 53 (LECPVECTCDKKGLVVDCSSSGLTRIPKNISRN) folds into the LRRNT domain. LRR repeat units follow at residues 27 to 49 (CTCD…IPKN), 50 to 72 (ISRN…RSDL), 73 to 96 (EGFN…ENVL), 97 to 120 (DHLP…PLCS), 122 to 143 (SRPL…EQVL), 145 to 168 (YFPD…KLFD), and 204 to 227 (KVYC…SALT). Residue N49 is glycosylated (N-linked (GlcNAc...) asparagine). The region spanning 180-228 (SNPWHCDCRASKVKALLQKVKWEKKVYCTNPVELRHQALDEVDDSALTC) is the LRRCT domain. N248 is a glycosylation site (N-linked (GlcNAc...) asparagine). The disordered stretch occupies residues 305-324 (RQSQHQGNGSPQFTYKPRDN). Residues 307-317 (SQHQGNGSPQF) show a composition bias toward polar residues. Ig-like C2-type domains follow at residues 315 to 401 (PQFT…FSLD) and 408 to 495 (PNIY…AKLT). 2 disulfides stabilise this stretch: C336–C385 and C429–C479. A coiled-coil region spans residues 508 to 550 (QIDEELLRAIAQKARQNVENAVEKTRKQLTQDKVTNTNDLKRL). N595 is a glycosylation site (N-linked (GlcNAc...) asparagine). C625 and C641 are disulfide-bonded. D719 serves as a coordination point for heme b. H720 functions as the Proton acceptor in the catalytic mechanism. A Ca(2+)-binding site is contributed by D721. Disulfide bonds link C740–C750 and C744–C771. N-linked (GlcNAc...) asparagine glycosylation is present at N741. T803, F805, D807, and S809 together coordinate Ca(2+). The N-linked (GlcNAc...) asparagine glycan is linked to N858. The heme b site is built by E877 and H973. 2 LRR repeats span residues 998–1022 (HKAF…GLFA) and 1049–1073 (VSLD…TEYR). Disulfide bonds link C1076-C1133 and C1174-C1201. An LRR 12 repeat occupies 1168–1189 (TLARLFCDNGDNIDRIQKDVFM).

The protein belongs to the peroxidase family. XPO subfamily. Ca(2+) is required as a cofactor. Requires heme b as cofactor. In terms of tissue distribution, expressed in the ventral nerve cord, the dorsal nerve cord, head neurons, GABAergic and cholinergic neurons, body wall muscles, vulval muscles, uterine muscles, intestine, the hypodermis and in coelomocytes.

The protein localises to the secreted. It is found in the extracellular space. Its subcellular location is the extracellular matrix. It carries out the reaction L-lysyl-[collagen] + L-methionyl-[collagen] + H2O2 = [collagen]-L-lysyl-N-S-L-methionyl-[collagen] + 2 H2O + H(+). It catalyses the reaction bromide + H2O2 = hypobromite + H2O. The catalysed reaction is L-lysyl-[collagen] + L-methionyl-[collagen] + hypobromite = [collagen]-L-lysyl-N-S-L-methionyl-[collagen] + bromide + H2O + H(+). The enzyme catalyses L-tyrosyl-[protein] + bromide + H2O2 + H(+) = 3-bromo-L-tyrosyl-[protein] + 2 H2O. It carries out the reaction hypobromite + L-tyrosyl-[protein] + H(+) = 3-bromo-L-tyrosyl-[protein] + H2O. Functionally, catalyzes the two-electron oxidation of bromide by hydrogen peroxide and generates hypobromite as a reactive intermediate which mediates the formation of sulfilimine cross-links between methionine and hydroxylysine residues within an uncross-linked collagen IV NC1 hexamer. Plays a role in the attachment of tissues and in axonal guidance during early developmental stages. May functionally antagonize the peroxidasin pxn-2 to maintain neuronal development. In Caenorhabditis elegans, this protein is Peroxidasin homolog pxn-1.